The sequence spans 49 residues: Large ribosomal subunit protein bL33A (49 aa).

It belongs to the bacterial ribosomal protein bL33 family.

This is Large ribosomal subunit protein bL33A from Mycoplasmopsis agalactiae (strain NCTC 10123 / CIP 59.7 / PG2) (Mycoplasma agalactiae).